Consider the following 303-residue polypeptide: Formylglycine-generating enzyme (303 aa).

Ca(2+)-binding residues include N188, I189, D202, Y204, N222, V223, G225, and V227. Residues C269 and C274 each contribute to the Cu(+) site.

The protein belongs to the sulfatase-modifying factor family. Cu(+) is required as a cofactor.

It carries out the reaction L-cysteinyl-[sulfatase] + 2 a thiol + O2 = an organic disulfide + 3-oxo-L-alanyl-[sulfatase] + hydrogen sulfide + H2O + H(+). Its pathway is protein modification; sulfatase oxidation. Functionally, oxidase that catalyzes the conversion of cysteine to 3-oxoalanine on target proteins. 3-oxoalanine modification, which is also named formylglycine (fGly), occurs in the maturation of arylsulfatases and some alkaline phosphatases that use the hydrated form of 3-oxoalanine as a catalytic nucleophile. The sequence is that of Formylglycine-generating enzyme from Thermomonospora curvata (strain ATCC 19995 / DSM 43183 / JCM 3096 / KCTC 9072 / NBRC 15933 / NCIMB 10081 / Henssen B9).